We begin with the raw amino-acid sequence, 226 residues long: Acyl-homoserine-lactone synthase (226 aa).

The protein belongs to the autoinducer synthase family.

It carries out the reaction a fatty acyl-[ACP] + S-adenosyl-L-methionine = an N-acyl-L-homoserine lactone + S-methyl-5'-thioadenosine + holo-[ACP] + H(+). Required for the synthesis of OHHL (N-(3-oxohexanoyl)-L-homoserine lactone), an autoinducer molecule. The chain is Acyl-homoserine-lactone synthase (psyI) from Pseudomonas amygdali pv. tabaci (Pseudomonas syringae pv. tabaci).